The primary structure comprises 330 residues: Ig gamma-2A chain C region, A allele (330 aa).

Ig-like domains are found at residues 6–98, 121–220, and 229–325; these read PSVY…KKIE, PSVF…RTIS, and PQVY…KSFS. Cystine bridges form between cysteine 27-cysteine 82, cysteine 144-cysteine 204, and cysteine 250-cysteine 308. N-linked (GlcNAc...) asparagine glycosylation occurs at asparagine 180.

The sequence is that of Ig gamma-2A chain C region, A allele (Ighg) from Mus musculus (Mouse).